The sequence spans 253 residues: 3-deoxy-manno-octulosonate cytidylyltransferase (253 aa).

Belongs to the KdsB family.

It localises to the cytoplasm. The catalysed reaction is 3-deoxy-alpha-D-manno-oct-2-ulosonate + CTP = CMP-3-deoxy-beta-D-manno-octulosonate + diphosphate. Its pathway is nucleotide-sugar biosynthesis; CMP-3-deoxy-D-manno-octulosonate biosynthesis; CMP-3-deoxy-D-manno-octulosonate from 3-deoxy-D-manno-octulosonate and CTP: step 1/1. The protein operates within bacterial outer membrane biogenesis; lipopolysaccharide biosynthesis. In terms of biological role, activates KDO (a required 8-carbon sugar) for incorporation into bacterial lipopolysaccharide in Gram-negative bacteria. This is 3-deoxy-manno-octulosonate cytidylyltransferase from Acinetobacter baumannii (strain AYE).